Here is a 193-residue protein sequence, read N- to C-terminus: Interleukin-18 (193 aa).

A propeptide spanning residues 1–36 is cleaved from the precursor; that stretch reads MAANLIEDNCINLVKMKFVNNTLYFKAESDEGLESD.

Belongs to the IL-1 family. Forms a ternary complex with ligand-binding receptor subunit IL18R1 and signaling receptor subunit IL18RAP at the plasma membrane. Mature IL18 first binds to IL18R1 forming a low affinity binary complex, which then interacts with IL18RAP to form a high affinity ternary complex that signals inside the cell. Interacts with cargo receptor TMED10; the interaction mediates the translocation from the cytoplasm into the ERGIC (endoplasmic reticulum-Golgi intermediate compartment) and thereby secretion. Post-translationally, the pro-IL-18 precursor is processed by CASP1, CASP4 or CASP5 to yield its mature, active form. The pro-IL-18 precursor features autoinhibitory interactions between the propeptide and the post-cleavage-site region, preventing recognition by the IL18R1 receptor. Processing by CASP1, CASP4 or CASP5 induces conformational changes to generate critical receptor-binding sites. The mature form is then secreted and released in the extracellular milieu by passing through the gasdermin-D (GSDMD) pore. In contrast, cleavage by CASP3 inactivates IL18.

Its subcellular location is the cytoplasm. The protein localises to the cytosol. It localises to the secreted. Functionally, pro-inflammatory cytokine primarily involved in epithelial barrier repair, polarized T-helper 1 (Th1) cell and natural killer (NK) cell immune responses. Upon binding to IL18R1 and IL18RAP, forms a signaling ternary complex which activates NF-kappa-B, triggering synthesis of inflammatory mediators. Synergizes with IL12/interleukin-12 to induce IFNG synthesis from T-helper 1 (Th1) cells and natural killer (NK) cells. Involved in transduction of inflammation downstream of pyroptosis: its mature form is specifically released in the extracellular milieu by passing through the gasdermin-D (GSDMD) pore. The polypeptide is Interleukin-18 (IL18) (Canis lupus familiaris (Dog)).